A 235-amino-acid polypeptide reads, in one-letter code: Claudin-15 (235 aa).

A topological domain (cytoplasmic) is located at residue M1. A helical membrane pass occupies residues 2–24; the sequence is LVAVEIFGFFLTAVGLLMLGVTL. Residues 25-74 are Extracellular-facing; it reads AHSSWRVSTVHGNVITTNTIFENLWYSCATDSMGVHNCWEFPSMLALSGY. C52 and C62 form a disulfide bridge. The chain crosses the membrane as a helical span at residues 75–99; it reads IQACRALMITAILLGFLGLFLGMVG. At 100 to 115 the chain is on the cytoplasmic side; the sequence is LRCTNIGGLELSRKTK. The residue at position 111 (S111) is a Phosphoserine. A helical membrane pass occupies residues 116–140; that stretch reads LAATAGALHILAGICGMVAVSWYAF. Over 141 to 159 the chain is Extracellular; sequence NITRDFFNPLYAGTKYELG. The tract at residues 146 to 147 is important for the formation of tight-junction strand-like structures; sequence FF. Residues 160–182 form a helical membrane-spanning segment; that stretch reads PALYLGWSACLLAILGGICLFSN. Residues 183 to 235 lie on the Cytoplasmic side of the membrane; it reads CCCSRDRDPATGVQLPYKAPVIPAASLAARLPAAASDEEGDSSFGKYGKNAYV. Phosphoserine occurs at positions 218 and 225.

It belongs to the claudin family. Can form homo- and heteropolymeric tight junction strands. In terms of processing, palmitoylated.

It is found in the cell junction. Its subcellular location is the tight junction. The protein resides in the cell membrane. It catalyses the reaction Na(+)(in) = Na(+)(out). The catalysed reaction is K(+)(in) = K(+)(out). The enzyme catalyses Cs(+)(in) = Cs(+)(out). It carries out the reaction Rb(+)(in) = Rb(+)(out). It catalyses the reaction Li(+)(in) = Li(+)(out). The catalysed reaction is NH4(+)(in) = NH4(+)(out). The enzyme catalyses methylamine(out) = methylamine(in). It carries out the reaction H2O(in) = H2O(out). In terms of biological role, forms paracellular channels: polymerizes in tight junction strands with cation- and water-selective channels through the strands, conveying epithelial permeability in a process known as paracellular tight junction permeability. In intestinal epithelium, allows for sodium and water fluxes from the peritoneal side to the lumen of the intestine to regulate nutrient absorption and intestinal morphogenesis. This is Claudin-15 (CLDN15) from Bos taurus (Bovine).